Reading from the N-terminus, the 478-residue chain is MILQNNSIAQQIANEGGVEAYLHAQQHKTMLRFLTCGSVDDGKSTLIGRLLHDTRQIYEDQLTTLHTDSKRLGTQGEKLDLALLVDGLQAEREQGITIDVAYRYFSTEQRKFIIADTPGHEQYTRNMATGASTCDLAILLIDARKGVLDQTRRHSFIATLLGIRHLVVAVNKMDLVDYQESVFEQFKQDYLSFAQQLPTDLDIKFVPLSALDGDNVASPSEKMNWYSGPTLLEVLESVDVVNASRQQPLRFPVQYVNRPNLDFRGYAGTLSAGIVRVGQKIKVLPSGVESTVARIVTFDGDLTQAGPGEAITLVLTDEVDISRGDLLVDASETLQAAQNALVDVVWMAEQPLVAGQSYDIKIAGKKTRARVENIQYQVEINSLTQRVVESLPLNGIGLVELAFDEPLVLDSYQRNRDTGGMIFIDRLSNVTVGAGLIRETLESVYQENTEFSAFELELNALVRRHFPHWGARDLLGGK.

Residues 28-244 form the tr-type G domain; sequence KTMLRFLTCG…LESVDVVNAS (217 aa). The tract at residues 37 to 44 is G1; that stretch reads GSVDDGKS. 37 to 44 provides a ligand contact to GTP; the sequence is GSVDDGKS. Residues 95 to 99 are G2; that stretch reads GITID. Residues 116 to 119 are G3; sequence DTPG. GTP contacts are provided by residues 116–120 and 171–174; these read DTPGH and NKMD. Residues 171 to 174 form a G4 region; the sequence is NKMD. The tract at residues 209-211 is G5; it reads SAL.

The protein belongs to the TRAFAC class translation factor GTPase superfamily. Classic translation factor GTPase family. CysN/NodQ subfamily. Heterodimer composed of CysD, the smaller subunit, and CysN.

The catalysed reaction is sulfate + ATP + H(+) = adenosine 5'-phosphosulfate + diphosphate. It functions in the pathway sulfur metabolism; hydrogen sulfide biosynthesis; sulfite from sulfate: step 1/3. Functionally, with CysD forms the ATP sulfurylase (ATPS) that catalyzes the adenylation of sulfate producing adenosine 5'-phosphosulfate (APS) and diphosphate, the first enzymatic step in sulfur assimilation pathway. APS synthesis involves the formation of a high-energy phosphoric-sulfuric acid anhydride bond driven by GTP hydrolysis by CysN coupled to ATP hydrolysis by CysD. This Yersinia enterocolitica serotype O:8 / biotype 1B (strain NCTC 13174 / 8081) protein is Sulfate adenylyltransferase subunit 1.